Consider the following 206-residue polypeptide: Small ribosomal subunit protein uS4 (206 aa).

The region spanning 96–158 (SRLDNVVYRM…AKKQLRIQNA (63 aa)) is the S4 RNA-binding domain.

The protein belongs to the universal ribosomal protein uS4 family. In terms of assembly, part of the 30S ribosomal subunit. Contacts protein S5. The interaction surface between S4 and S5 is involved in control of translational fidelity.

One of the primary rRNA binding proteins, it binds directly to 16S rRNA where it nucleates assembly of the body of the 30S subunit. In terms of biological role, with S5 and S12 plays an important role in translational accuracy. The sequence is that of Small ribosomal subunit protein uS4 from Francisella tularensis subsp. holarctica (strain OSU18).